A 526-amino-acid polypeptide reads, in one-letter code: Fluoride export protein 1 (526 aa).

Disordered stretches follow at residues 1-73 and 90-149; these read MMTA…RRAS and ASNI…KQAG. At 1–159 the chain is on the cytoplasmic side; the sequence is MMTAPSDTEG…VVAKRQKVSR (159 aa). Basic and acidic residues-rich tracts occupy residues 21 to 36 and 103 to 123; these read SPDRNRQRNLVDDHNH and PITRLDTLERVRTRDRDYLRE. The helical transmembrane segment at 160 to 180 threads the bilayer; sequence LATELYTISYLIFFSLLGTLA. Topologically, residues 181–194 are extracellular; the sequence is RLGLQALTSAYPQS. A helical transmembrane segment spans residues 195-215; the sequence is PIIFPSIWPNFAGCVVMGFLA. The Cytoplasmic segment spans residues 216-260; that stretch reads EDRMLFRPDWGQQQPNPKKDDDDDEEAKDIDPAAAKKAHMALKKT. The segment at 223-242 is disordered; it reads PDWGQQQPNPKKDDDDDEEA. Residues 261–281 traverse the membrane as a helical segment; it reads IPLYVGLATGFCGSFTSFSSF. Residues 282–310 lie on the Extracellular side of the membrane; the sequence is IRDIYLALSNDLAAHGSSAAPVSRNGGYS. A helical transmembrane segment spans residues 311-331; it reads FMALLAVTITTISLSLSGLFA. The Cytoplasmic segment spans residues 332–361; sequence GAHLAIAIATLFTRFDLGLPYTFVSRILDR. A helical membrane pass occupies residues 362 to 382; sequence LIVLLGFGCWLGAVLLSIWPP. Over 383-398 the chain is Extracellular; it reads DRHSAQPEKERWRGTA. Residues 399 to 419 traverse the membrane as a helical segment; the sequence is TFALVFAPLGCLTRFYASAHL. The Cytoplasmic segment spans residues 420 to 424; sequence NGRLP. The chain crosses the membrane as a helical span at residues 425–445; it reads SFPLGTFVVNMLGTAVLGMAW. Topologically, residues 446–452 are extracellular; sequence DLNHVPS. Residues 453–473 form a helical membrane-spanning segment; sequence LGGVVGCQVLQGVADGFCGCL. The Cytoplasmic portion of the chain corresponds to 474-492; the sequence is TTVSTWVSELAALRRRHAY. Residues 493–513 traverse the membrane as a helical segment; sequence VYGGASVGGGLALMVVVMGSL. Topologically, residues 514 to 526 are extracellular; that stretch reads RWTEGFGEVKCIS.

This sequence belongs to the fluoride channel Fluc/FEX (TC 1.A.43) family.

Its subcellular location is the cell membrane. It catalyses the reaction fluoride(in) = fluoride(out). Its function is as follows. Fluoride channel required for the rapid expulsion of cytoplasmic fluoride. The polypeptide is Fluoride export protein 1 (Neurospora crassa (strain ATCC 24698 / 74-OR23-1A / CBS 708.71 / DSM 1257 / FGSC 987)).